Here is a 246-residue protein sequence, read N- to C-terminus: Dof zinc finger protein DOF4.7 (246 aa).

2 stretches are compositionally biased toward polar residues: residues 1–12 (MMTSSHQSNTTG) and 27–37 (QINNKEPSPAT). The disordered stretch occupies residues 1–39 (MMTSSHQSNTTGFKPRRIKTTAKPPRQINNKEPSPATQP). The Dof-type zinc-finger motif lies at 41–95 (LKCPRCDSVNTKFCYYNNYSLSQPRHYCKNCRRYWTRGGALRNVPIGGSTRNKNK). Positions 43, 46, 68, and 71 each coordinate Zn(2+). A disordered region spans residues 216–235 (GGATSGNHEDNDDGEGNLGN).

Interacts with ZFP2. As to expression, highly expressed at the base of all organs of the flower, especially in the abscission zone (AZ) of petals, stamens and sepals. Expressed at low levels in sepals, filaments, stigmatic papillae, tips of young siliques, and at the base of pedicels and leaf trichomes.

It localises to the nucleus. Transcription factor that binds specifically to a 5'-AA[AG]G-3' consensus core sequence. Involved in the negative regulation of floral organ abscission by binding to the typical DOF 5'-AAAG-3' sequences in the promoter of ADPG2/PGAZAT, and by down-regulating its expression. ADPG2/PGAZAT is an abscission-related and cell wall hydrolyzing polygalacturonase. May act through the interaction with ZFP2, an abscission-related transcription factor. The protein is Dof zinc finger protein DOF4.7 of Arabidopsis thaliana (Mouse-ear cress).